Consider the following 516-residue polypeptide: Phosphatidylserine decarboxylase proenzyme 2, mitochondrial (516 aa).

The N-terminal 21 residues, 1–21 (MRPRQRFRRFHPRWSKVNLRG), are a transit peptide targeting the mitochondrion. The Mitochondrial matrix portion of the chain corresponds to 22–33 (FGGVGALKGVKA). A helical membrane pass occupies residues 34 to 52 (LNGMNVRVSMRLKWISNRI). Residues 53-516 (HRIRRSRRLG…GQYVRVGEAL (464 aa)) are Mitochondrial intermembrane-facing. Active-site charge relay system; for autoendoproteolytic cleavage activity residues include Asp159, His373, and Ser488. The Schiff-base intermediate with substrate; via pyruvic acid; for decarboxylase activity role is filled by Ser488. Ser488 bears the Pyruvic acid (Ser); by autocatalysis mark.

Belongs to the phosphatidylserine decarboxylase family. PSD-B subfamily. Eukaryotic type I sub-subfamily. Heterodimer of a large membrane-associated beta subunit and a small pyruvoyl-containing alpha subunit. Requires pyruvate as cofactor. Post-translationally, is synthesized initially as an inactive proenzyme. Formation of the active enzyme involves a self-maturation process in which the active site pyruvoyl group is generated from an internal serine residue via an autocatalytic post-translational modification. Two non-identical subunits are generated from the proenzyme in this reaction, and the pyruvate is formed at the N-terminus of the alpha chain, which is derived from the carboxyl end of the proenzyme. The autoendoproteolytic cleavage occurs by a canonical serine protease mechanism, in which the side chain hydroxyl group of the serine supplies its oxygen atom to form the C-terminus of the beta chain, while the remainder of the serine residue undergoes an oxidative deamination to produce ammonia and the pyruvoyl prosthetic group on the alpha chain. During this reaction, the Ser that is part of the protease active site of the proenzyme becomes the pyruvoyl prosthetic group, which constitutes an essential element of the active site of the mature decarboxylase.

The protein resides in the mitochondrion. Its subcellular location is the mitochondrion inner membrane. It is found in the nucleus envelope. It localises to the lipid droplet. The protein localises to the endoplasmic reticulum membrane. The enzyme catalyses a 1,2-diacyl-sn-glycero-3-phospho-L-serine + H(+) = a 1,2-diacyl-sn-glycero-3-phosphoethanolamine + CO2. It participates in phospholipid metabolism; phosphatidylethanolamine biosynthesis; phosphatidylethanolamine from CDP-diacylglycerol: step 2/2. Catalyzes the formation of phosphatidylethanolamine (PtdEtn) from phosphatidylserine (PtdSer). Plays a central role in phospholipid metabolism and in the interorganelle trafficking of phosphatidylserine. Together with psd1 and psd3, responsible for the majority of phosphatidylethanolamine synthesis. Plays a role in lipid droplet biogenesis at the endoplasmic reticulum membrane. This chain is Phosphatidylserine decarboxylase proenzyme 2, mitochondrial, found in Schizosaccharomyces pombe (strain 972 / ATCC 24843) (Fission yeast).